A 363-amino-acid chain; its full sequence is 43 kDa protein (363 aa).

This Lepidoptera (butterflies and moths) protein is 43 kDa protein (P43).